The following is a 475-amino-acid chain: Ribulose bisphosphate carboxylase large chain (475 aa).

Substrate contacts are provided by Asn-123 and Thr-173. Residue Lys-175 is the Proton acceptor of the active site. Substrate is bound at residue Lys-177. Residues Lys-201, Asp-203, and Glu-204 each contribute to the Mg(2+) site. Position 201 is an N6-carboxylysine (Lys-201). His-294 (proton acceptor) is an active-site residue. Arg-295, His-327, and Ser-379 together coordinate substrate.

It belongs to the RuBisCO large chain family. Type I subfamily. Heterohexadecamer of 8 large chains and 8 small chains; disulfide-linked. The disulfide link is formed within the large subunit homodimers. The cofactor is Mg(2+). In terms of processing, the disulfide bond which can form in the large chain dimeric partners within the hexadecamer appears to be associated with oxidative stress and protein turnover.

It is found in the plastid. The protein resides in the chloroplast. It carries out the reaction 2 (2R)-3-phosphoglycerate + 2 H(+) = D-ribulose 1,5-bisphosphate + CO2 + H2O. It catalyses the reaction D-ribulose 1,5-bisphosphate + O2 = 2-phosphoglycolate + (2R)-3-phosphoglycerate + 2 H(+). Its function is as follows. RuBisCO catalyzes two reactions: the carboxylation of D-ribulose 1,5-bisphosphate, the primary event in carbon dioxide fixation, as well as the oxidative fragmentation of the pentose substrate in the photorespiration process. Both reactions occur simultaneously and in competition at the same active site. The protein is Ribulose bisphosphate carboxylase large chain of Euglena gracilis.